The following is a 273-amino-acid chain: Hydroxynaphthalene reductase arp2 (273 aa).

NADP(+) contacts are provided by isoleucine 24, aspartate 70, asparagine 97, and arginine 130. Active-site proton donor residues include serine 146 and serine 147. NADP(+) contacts are provided by tyrosine 160, lysine 164, valine 193, and serine 195. Tyrosine 160 (proton acceptor) is an active-site residue. Lysine 164 serves as the catalytic Lowers pKa of active site Tyr.

This sequence belongs to the short-chain dehydrogenases/reductases (SDR) family.

The protein resides in the endosome. It functions in the pathway pigment biosynthesis; melanin biosynthesis. With respect to regulation, tricyclazole and pyroquilon inhibit arp2 hydroxynaphtalene reductase activity. Functionally, hydroxynaphthalene reductase; part of the gene cluster that mediates the biosynthesis of dihydroxynaphthalene (DHN)-melanin, a bluish-green pigment and a structural component of the conidial wall. The first step of the pathway is the production of the heptaketide naphtopyrone YWA1 by the polyketide synthase alb1 though condensation of acetyl-CoA with malonyl-CoA. The naphtopyrone YWA1 is then converted to the pentaketide 1,3,6,8-tetrahydroxynaphthalene (1,3,6,8-THN) by the heptaketide hydrolyase ayg1 though chain-length shortening. 1,3,6,8-THN is substrate of the hydroxynaphthalene reductase arp2 to yield scytalone. The scytalone dehydratase arp1 then reduces scytalone to 1,3,8-THN. 1,3,8-THN is also substrate of the hydroxynaphthalene reductase arp2 to yield vermelone. Vermelone is further converted by the multicopper oxidase abr1 to 1,8-DHN. Finally the laccase abr2 transforms 1,8-DHN to DHN-melanin. DHN-melanin biosynthesis appears to be initiated in endosomes where early enzymes (abl1, ayg1, arp1 and arp2) localize, with exocytosis leading to melanin deposition on the cell surface where late enzymes (abr1 and abr2) localize. DHN-melanin is an important structural component of the outer cell wall and is required for the presence of conidial surface hydrophobins. DHN-melanin also plays a crucial role in fungal virulence, including a protective role against the host's immune defenses. DHN-melanin also protects conidia against amoeba predation. The protein is Hydroxynaphthalene reductase arp2 of Aspergillus fumigatus (strain ATCC MYA-4609 / CBS 101355 / FGSC A1100 / Af293) (Neosartorya fumigata).